Here is a 243-residue protein sequence, read N- to C-terminus: Probable transcriptional regulatory protein PTH_1024 (243 aa).

Belongs to the TACO1 family.

The protein localises to the cytoplasm. This chain is Probable transcriptional regulatory protein PTH_1024, found in Pelotomaculum thermopropionicum (strain DSM 13744 / JCM 10971 / SI).